A 138-amino-acid polypeptide reads, in one-letter code: Ribosome-binding factor A (138 aa).

It belongs to the RbfA family. In terms of assembly, monomer. Binds 30S ribosomal subunits, but not 50S ribosomal subunits or 70S ribosomes.

The protein localises to the cytoplasm. Its function is as follows. One of several proteins that assist in the late maturation steps of the functional core of the 30S ribosomal subunit. Associates with free 30S ribosomal subunits (but not with 30S subunits that are part of 70S ribosomes or polysomes). Required for efficient processing of 16S rRNA. May interact with the 5'-terminal helix region of 16S rRNA. This is Ribosome-binding factor A from Bradyrhizobium sp. (strain BTAi1 / ATCC BAA-1182).